The chain runs to 818 residues: Protein Cep78 homolog (818 aa).

Disordered regions lie at residues 513-589, 691-748, and 768-798; these read LDVE…HEFA, RQAN…TEAT, and KQSESMSLTEEAGDGDAGGGGGSGDFGDQNV. Over residues 514–539 the composition is skewed to acidic residues; that stretch reads DVEEEEEEEEEEQQAEESQSESEPQN. Residues 561–589 show a composition bias toward basic and acidic residues; sequence VRSEIKYVENNPKEAAKKNRESKSDHEFA. Gly residues predominate over residues 782-792; it reads GDAGGGGGSGD.

The protein belongs to the CEP78 family.

It is found in the cytoplasm. The protein localises to the cytoskeleton. Its subcellular location is the microtubule organizing center. The protein resides in the centrosome. It localises to the centriole. It is found in the cilium basal body. In terms of biological role, may play a role in cilium biogenesis. This is Protein Cep78 homolog from Drosophila melanogaster (Fruit fly).